Reading from the N-terminus, the 562-residue chain is Phosphoenolpyruvate carboxykinase (ATP) (562 aa).

265 to 272 (GLSGTGKT) is a binding site for ATP.

It belongs to the phosphoenolpyruvate carboxykinase (ATP) family.

It carries out the reaction oxaloacetate + ATP = phosphoenolpyruvate + ADP + CO2. Its pathway is carbohydrate biosynthesis; gluconeogenesis. This chain is Phosphoenolpyruvate carboxykinase (ATP) (pckA), found in Dictyostelium discoideum (Social amoeba).